The chain runs to 301 residues: Phosphatidylglycerol--prolipoprotein diacylglyceryl transferase (301 aa).

3 helical membrane passes run 17 to 37, 59 to 79, and 97 to 117; these read LAVR…IVVG, MLFY…VLFY, and GGMS…LFAY. Arginine 142 contributes to the a 1,2-diacyl-sn-glycero-3-phospho-(1'-sn-glycerol) binding site. 2 helical membrane-spanning segments follow: residues 230-250 and 265-285; these read MGAI…TVEF and LSMG…LLVW.

This sequence belongs to the Lgt family.

Its subcellular location is the cell inner membrane. The catalysed reaction is L-cysteinyl-[prolipoprotein] + a 1,2-diacyl-sn-glycero-3-phospho-(1'-sn-glycerol) = an S-1,2-diacyl-sn-glyceryl-L-cysteinyl-[prolipoprotein] + sn-glycerol 1-phosphate + H(+). Its pathway is protein modification; lipoprotein biosynthesis (diacylglyceryl transfer). Its function is as follows. Catalyzes the transfer of the diacylglyceryl group from phosphatidylglycerol to the sulfhydryl group of the N-terminal cysteine of a prolipoprotein, the first step in the formation of mature lipoproteins. The sequence is that of Phosphatidylglycerol--prolipoprotein diacylglyceryl transferase from Paraburkholderia phytofirmans (strain DSM 17436 / LMG 22146 / PsJN) (Burkholderia phytofirmans).